The primary structure comprises 95 residues: Aspartyl/glutamyl-tRNA(Asn/Gln) amidotransferase subunit C (95 aa).

It belongs to the GatC family. As to quaternary structure, heterotrimer of A, B and C subunits.

It catalyses the reaction L-glutamyl-tRNA(Gln) + L-glutamine + ATP + H2O = L-glutaminyl-tRNA(Gln) + L-glutamate + ADP + phosphate + H(+). It carries out the reaction L-aspartyl-tRNA(Asn) + L-glutamine + ATP + H2O = L-asparaginyl-tRNA(Asn) + L-glutamate + ADP + phosphate + 2 H(+). Its function is as follows. Allows the formation of correctly charged Asn-tRNA(Asn) or Gln-tRNA(Gln) through the transamidation of misacylated Asp-tRNA(Asn) or Glu-tRNA(Gln) in organisms which lack either or both of asparaginyl-tRNA or glutaminyl-tRNA synthetases. The reaction takes place in the presence of glutamine and ATP through an activated phospho-Asp-tRNA(Asn) or phospho-Glu-tRNA(Gln). The chain is Aspartyl/glutamyl-tRNA(Asn/Gln) amidotransferase subunit C from Brucella anthropi (strain ATCC 49188 / DSM 6882 / CCUG 24695 / JCM 21032 / LMG 3331 / NBRC 15819 / NCTC 12168 / Alc 37) (Ochrobactrum anthropi).